Consider the following 159-residue polypeptide: Thioredoxin O2, mitochondrial (159 aa).

Ser-40 carries the post-translational modification Phosphoserine. Residues 43-159 (FAEGDRSSFV…LKSVMEQLYK (117 aa)) form the Thioredoxin domain. Residues Cys-83 and Cys-86 each act as nucleophile in the active site. Cysteines 83 and 86 form a disulfide.

The protein belongs to the thioredoxin family. Plant O-type subfamily.

It is found in the mitochondrion. Its function is as follows. Thiol-disulfide oxidoreductase that may participate in various redox reactions. Possesses insulin disulfide bonds reducing activity. Reduced by thioredoxin reductases NTRA and NTRB. This Arabidopsis thaliana (Mouse-ear cress) protein is Thioredoxin O2, mitochondrial.